A 363-amino-acid chain; its full sequence is Spermidine/putrescine import ATP-binding protein PotA 2 (363 aa).

Residues 6-236 enclose the ABC transporter domain; it reads LEIRNVTRRF…PRSRFVADFI (231 aa). 38–45 provides a ligand contact to ATP; the sequence is GPSGCGKT.

It belongs to the ABC transporter superfamily. Spermidine/putrescine importer (TC 3.A.1.11.1) family. The complex is composed of two ATP-binding proteins (PotA), two transmembrane proteins (PotB and PotC) and a solute-binding protein (PotD).

The protein resides in the cell inner membrane. The enzyme catalyses ATP + H2O + polyamine-[polyamine-binding protein]Side 1 = ADP + phosphate + polyamineSide 2 + [polyamine-binding protein]Side 1.. Its function is as follows. Part of the ABC transporter complex PotABCD involved in spermidine/putrescine import. Responsible for energy coupling to the transport system. This is Spermidine/putrescine import ATP-binding protein PotA 2 from Pseudomonas aeruginosa (strain ATCC 15692 / DSM 22644 / CIP 104116 / JCM 14847 / LMG 12228 / 1C / PRS 101 / PAO1).